Reading from the N-terminus, the 428-residue chain is Palmitoyltransferase ZDHHC23-B (428 aa).

At 1–82 (MSIMKKRSSR…RVPWISGARQ (82 aa)) the chain is on the cytoplasmic side. Residues 83 to 99 (IDVSLIPPLILLPVFLH) form a helical membrane-spanning segment. At 100-105 (IAALHY) the chain is on the lumenal side. Residues 106–125 (LLGIIMLTAMPITVLWYYFF) form a helical membrane-spanning segment. Over 126–132 (THRKKGR) the chain is Cytoplasmic. Residues 133-153 (TLFFLGLALFSLFYMFYLFLT) form a helical membrane-spanning segment. At 154 to 160 (QVVPRGE) the chain is on the lumenal side. Residues 161-181 (VTELQLAVVTAGVALTVIFLM) traverse the membrane as a helical segment. At 182–294 (LTKRGPGLVR…SCVGLANHRT (113 aa)) the chain is on the cytoplasmic side. Residues 250–300 (NWCAVCKVVRPQRAGHCRICGVCVLRLDHHCVWINSCVGLANHRTFLLTLL) enclose the DHHC domain. Cysteine 280 serves as the catalytic S-palmitoyl cysteine intermediate. A helical membrane pass occupies residues 295–315 (FLLTLLFFLLTSIYGISLVLA). The Lumenal portion of the chain corresponds to 316–350 (SVCPDQRVLTALFYCPDVYSQYSSALCFTCAWYSS). A helical transmembrane segment spans residues 351 to 371 (IVTGGLLHLLLLQILNISLNV). The Cytoplasmic portion of the chain corresponds to 372–428 (TEREARLALREKSAQRRLWGLIVHTGHYSRGFWSNWTEFLTMTEDTQPAGHKTEDLV).

This sequence belongs to the DHHC palmitoyltransferase family.

Its subcellular location is the golgi apparatus membrane. The protein localises to the golgi apparatus. It localises to the trans-Golgi network membrane. The catalysed reaction is L-cysteinyl-[protein] + hexadecanoyl-CoA = S-hexadecanoyl-L-cysteinyl-[protein] + CoA. Palmitoyltransferase that could catalyze the addition of palmitate onto various protein substrates and be involved in a variety of cellular processes. The chain is Palmitoyltransferase ZDHHC23-B from Danio rerio (Zebrafish).